The chain runs to 365 residues: Aspartate-semialdehyde dehydrogenase (365 aa).

NADP(+)-binding residues include T12, G13, S14, V15, S37, S40, L85, and D86. C156 acts as the Acyl-thioester intermediate in catalysis. NADP(+) is bound at residue G188. The Proton acceptor role is filled by H256. Residue N343 participates in NADP(+) binding.

Belongs to the aspartate-semialdehyde dehydrogenase family. As to quaternary structure, homotetramer; dimer of dimers.

The protein resides in the cytoplasm. It is found in the cytosol. The protein localises to the nucleus. It carries out the reaction L-aspartate 4-semialdehyde + phosphate + NADP(+) = 4-phospho-L-aspartate + NADPH + H(+). It functions in the pathway amino-acid biosynthesis; L-methionine biosynthesis via de novo pathway; L-homoserine from L-aspartate: step 2/3. Its pathway is amino-acid biosynthesis; L-threonine biosynthesis; L-threonine from L-aspartate: step 2/5. Its activity is regulated as follows. Inhibited by the non-competitive inhibitors phthalaldehyde and naphthalene, the competitive inhibitor 1,4-benzoquinone and derivates such as 2-chloro-3-methoxy-1,4-naphthoquinone, 2,3-dichloro-1,4-naphthoquinone, 2-chloro-1,4-naphthoquinone, 2-bromo-1,4-naphthoquinone and 2,3-dichloro-5,8-dihydroxy-1,4-naphthoquinone, and 5-aminoisoquinoline. Inhibited by vinyl sulfones. In terms of biological role, catalyzes the NADPH-dependent formation of L-aspartate 4-semialdehyde (L-ASA) by the reductive dephosphorylation of 4-phospho-L-aspartate. Mediates the second step in the biosynthesis of amino acids that derive from aspartate (the aspartate family of amino acids), including methioinine and threonine, the latter of which is a precursor to isoleucine. In Candida albicans (strain SC5314 / ATCC MYA-2876) (Yeast), this protein is Aspartate-semialdehyde dehydrogenase.